The primary structure comprises 171 residues: Calcium-binding allergen Ole e 8 (171 aa).

4 consecutive EF-hand domains span residues 16-51 (QEPNEVQGVFNRFDANGDGKISGDELAGVLKALGSN), 52-87 (TSKEEIGRIMEEIDTDKDGFINVQEFAAFVKAETDP), 92-127 (GGENELKEAFELYDQDHNGLISSVELHKILTRLGER), and 128-163 (YAEHDCVEMIKSVDSDGDGYVSFEEFKKMMTNKSGN). Ca(2+)-binding residues include aspartate 29, asparagine 31, aspartate 33, lysine 35, glutamate 40, aspartate 65, aspartate 67, aspartate 69, glutamate 76, aspartate 105, aspartate 107, asparagine 109, glutamate 116, aspartate 141, aspartate 143, aspartate 145, tyrosine 147, and glutamate 152.

In terms of assembly, homodimer. As to expression, expressed in pollen.

The chain is Calcium-binding allergen Ole e 8 from Olea europaea (Common olive).